Here is a 246-residue protein sequence, read N- to C-terminus: Exosome complex component Rrp41 (246 aa).

The protein belongs to the RNase PH family. Rrp41 subfamily. In terms of assembly, component of the archaeal exosome complex. Forms a hexameric ring-like arrangement composed of 3 Rrp41-Rrp42 heterodimers. The hexameric ring associates with a trimer of Rrp4 and/or Csl4 subunits.

Its subcellular location is the cytoplasm. Catalytic component of the exosome, which is a complex involved in RNA degradation. Has 3'-&gt;5' exoribonuclease activity. Can also synthesize heteromeric RNA-tails. This Pyrobaculum aerophilum (strain ATCC 51768 / DSM 7523 / JCM 9630 / CIP 104966 / NBRC 100827 / IM2) protein is Exosome complex component Rrp41.